A 295-amino-acid polypeptide reads, in one-letter code: Cuticle collagen 3A3 (295 aa).

Residues 81–278 form a disordered region; it reads AITSSEENGG…GRPGEPGICP (198 aa). Pro residues-rich tracts occupy residues 97–109 and 146–160; these read PGPP…PGRP and AGPP…PPGD. 3 triple-helical region regions span residues 98–127, 147–203, and 212–277; these read GPPG…PGLP, GPPG…VGED, and GDQG…PGIC. Residues 172–182 are compositionally biased toward low complexity; the sequence is QDGIPGQQGTK. Residues 217–228 show a composition bias toward pro residues; that stretch reads PGEPGPEGPPGE. Over residues 229-244 the composition is skewed to low complexity; the sequence is PGLQGPVGMPGQVGQK. Pro residues predominate over residues 261–271; that stretch reads RPGPPGPPGRP.

The protein belongs to the cuticular collagen family.

Nematode cuticles are composed largely of collagen-like proteins. The cuticle functions both as an exoskeleton and as a barrier to protect the worm from its environment. In Haemonchus contortus (Barber pole worm), this protein is Cuticle collagen 3A3 (3A3).